The chain runs to 299 residues: Ethylmalonyl-CoA decarboxylase (299 aa).

Belongs to the enoyl-CoA hydratase/isomerase family.

The protein resides in the cytoplasm. The protein localises to the cytosol. It carries out the reaction (2S)-ethylmalonyl-CoA + H(+) = butanoyl-CoA + CO2. It catalyses the reaction (S)-methylmalonyl-CoA + H(+) = propanoyl-CoA + CO2. The enzyme catalyses (2R)-ethylmalonyl-CoA + H(+) = butanoyl-CoA + CO2. Functionally, decarboxylates ethylmalonyl-CoA, a potentially toxic metabolite, to form butyryl-CoA, suggesting it might be involved in metabolite proofreading. Acts preferentially on (S)-ethylmalonyl-CoA but also has some activity on the (R)-isomer. Also has methylmalonyl-CoA decarboxylase activity at lower level. This Xenopus tropicalis (Western clawed frog) protein is Ethylmalonyl-CoA decarboxylase (echdc1).